Consider the following 273-residue polypeptide: Large ribosomal subunit protein uL2 (273 aa).

Disordered regions lie at residues 34-54 (LEKKSKSGGRNNNGRITTRHI) and 223-273 (VAMN…RRRK).

It belongs to the universal ribosomal protein uL2 family. As to quaternary structure, part of the 50S ribosomal subunit. Forms a bridge to the 30S subunit in the 70S ribosome.

One of the primary rRNA binding proteins. Required for association of the 30S and 50S subunits to form the 70S ribosome, for tRNA binding and peptide bond formation. It has been suggested to have peptidyltransferase activity; this is somewhat controversial. Makes several contacts with the 16S rRNA in the 70S ribosome. This chain is Large ribosomal subunit protein uL2, found in Azotobacter vinelandii (strain DJ / ATCC BAA-1303).